The primary structure comprises 252 residues: MLTKRIIPCLDVDHGRVVKGTNFLNLRDAGDPVELAAAYDREGADELVFLDISASVEGRDIMIDVARRTAAQVFIPFTVGGGLRSLEDIRAMLAAGADKISLNTAAVLDPDLVATAARRFGSQCVVVAIDARRTGPGRWEVYTHGGRRPTGRDAVAWARQVEELGAGEILLTSMDCDGTLDGYDLELTATVSQAVNIPVIASGGVGKLEHLYEGLTAGRADAVLAASIFHFGTYTIKEAKDYLAARGVPVRL.

Residues aspartate 11 and aspartate 130 contribute to the active site.

The protein belongs to the HisA/HisF family. Heterodimer of HisH and HisF.

The protein localises to the cytoplasm. The catalysed reaction is 5-[(5-phospho-1-deoxy-D-ribulos-1-ylimino)methylamino]-1-(5-phospho-beta-D-ribosyl)imidazole-4-carboxamide + L-glutamine = D-erythro-1-(imidazol-4-yl)glycerol 3-phosphate + 5-amino-1-(5-phospho-beta-D-ribosyl)imidazole-4-carboxamide + L-glutamate + H(+). Its pathway is amino-acid biosynthesis; L-histidine biosynthesis; L-histidine from 5-phospho-alpha-D-ribose 1-diphosphate: step 5/9. In terms of biological role, IGPS catalyzes the conversion of PRFAR and glutamine to IGP, AICAR and glutamate. The HisF subunit catalyzes the cyclization activity that produces IGP and AICAR from PRFAR using the ammonia provided by the HisH subunit. In Moorella thermoacetica (strain ATCC 39073 / JCM 9320), this protein is Imidazole glycerol phosphate synthase subunit HisF.